A 725-amino-acid polypeptide reads, in one-letter code: MASWGGEKRGGAEGSPKLAVYATRKTRSVRSQEDQWYLGYPGDQWSSGFSYSWWKNSVGSESKHGEGALDQPQHDVRLEDLGELHRAARSGDVPGVEHVLAPGDTGVDKRDRKKSIQQLVPEYKEKQTPESLPQNNNPDWHPTNLTLSDETCQRSKNLKVGDKSPSVSPSMPENQSATKELGQMNLTEREKMDTGVVLLSGNDTLHDLCQSQLPENKESKEAEQDLELTSEEEQERLKGCENKQPQKTSQEPEMAKDCDREDIPIYPVLPHVQKSEEMWIEQGKLEWKNQLKLVINELKQRFGEIYEKYKIPACPEEEPLLDNSTRGTDVKDIPFNLTNNIPGCEEEDASEISVSVVFETFPEQKEPSLKNIIHPYYHPYSGSQEHVCQSSSKLHLHENKLDCDNDNKLGIGHIFSTDNNFHNDASTKKARNPEVVTVEMKEDQEFDLQMTKNMNQNSDSGSTNNYKSLKPKLENLSSLPPDSDRTSEVYLHEELQQDMQKFKNEVNTLEEEFLALKKENVQLHKEVEEEMEKHRSNSTELSGTLTDGTTVGNDDDGLNQQIPRKENEEHDRPADKTANEKNKVKNQIYPEADFADSMEPSEIASEDCELSHSVYENFMLLIEQLRMEYKDSASLPRIQDTFCLCEHLLKLKNNHCDQLTVKLKQMENMVSVLQNELSETKKTKLQLELQKIEWEKELYDLRLALKQENGRKEMPICCIIKIVNS.

Basic and acidic residues predominate over residues 1–11; sequence MASWGGEKRGG. 5 disordered regions span residues 1–25, 87–188, 213–260, 453–485, and 528–586; these read MASW…ATRK, AARS…NLTE, LPEN…DCDR, NMNQ…DSDR, and EEEM…KVKN. Polar residues-rich tracts occupy residues 129-150 and 165-178; these read PESL…LSDE and PSVS…QSAT. Residues 215 to 244 adopt a coiled-coil conformation; that stretch reads ENKESKEAEQDLELTSEEEQERLKGCENKQ. Residues 224–234 are compositionally biased toward acidic residues; the sequence is QDLELTSEEEQ. The segment covering 453-467 has biased composition (polar residues); it reads NMNQNSDSGSTNNYK. Residues 490-546 adopt a coiled-coil conformation; that stretch reads YLHEELQQDMQKFKNEVNTLEEEFLALKKENVQLHKEVEEEMEKHRSNSTELSGTLT. A compositionally biased stretch (basic and acidic residues) spans 528–537; sequence EEEMEKHRSN. A compositionally biased stretch (low complexity) spans 543–552; sequence GTLTDGTTVG. Over residues 563–583 the composition is skewed to basic and acidic residues; that stretch reads PRKENEEHDRPADKTANEKNK. Residues 648–713 adopt a coiled-coil conformation; sequence LLKLKNNHCD…ALKQENGRKE (66 aa).

It belongs to the CCDC144 family.

The polypeptide is Putative coiled-coil domain-containing protein 144B (Homo sapiens (Human)).